The sequence spans 418 residues: Nickel and cobalt resistance protein CnrC (418 aa).

The N-terminal stretch at 1–29 (MKQVISSFLCRPRFVGSAIWLLPVALSHA) is a signal peptide.

This sequence belongs to the outer membrane factor (OMF) (TC 1.B.17) family.

In terms of biological role, the products of the genes cnrA, cnrB, and cnrC are likely to form a membrane-bound protein complex catalyzing an energy-dependent efflux of Ni(2+) and Co(2+). The mechanism of action of the CnrCBA complex may be that of a proton/cation antiporter. This chain is Nickel and cobalt resistance protein CnrC (cnrC), found in Cupriavidus metallidurans (strain ATCC 43123 / DSM 2839 / NBRC 102507 / CH34) (Ralstonia metallidurans).